The sequence spans 215 residues: uncharacterized protein (215 aa).

This is an uncharacterized protein from Methanocaldococcus jannaschii (strain ATCC 43067 / DSM 2661 / JAL-1 / JCM 10045 / NBRC 100440) (Methanococcus jannaschii).